Here is a 480-residue protein sequence, read N- to C-terminus: ATP synthase subunit beta 1 (480 aa).

Position 154 to 161 (154 to 161) interacts with ATP; sequence GGAGVGKT.

The protein belongs to the ATPase alpha/beta chains family. As to quaternary structure, F-type ATPases have 2 components, CF(1) - the catalytic core - and CF(0) - the membrane proton channel. CF(1) has five subunits: alpha(3), beta(3), gamma(1), delta(1), epsilon(1). CF(0) has four main subunits: a(1), b(1), b'(1) and c(9-12).

It is found in the cell inner membrane. The catalysed reaction is ATP + H2O + 4 H(+)(in) = ADP + phosphate + 5 H(+)(out). Its function is as follows. Produces ATP from ADP in the presence of a proton gradient across the membrane. The catalytic sites are hosted primarily by the beta subunits. This Chlorobaculum tepidum (strain ATCC 49652 / DSM 12025 / NBRC 103806 / TLS) (Chlorobium tepidum) protein is ATP synthase subunit beta 1.